The primary structure comprises 60 residues: Large ribosomal subunit protein uL30 (60 aa).

This sequence belongs to the universal ribosomal protein uL30 family. In terms of assembly, part of the 50S ribosomal subunit.

This Pseudoalteromonas translucida (strain TAC 125) protein is Large ribosomal subunit protein uL30.